Here is a 674-residue protein sequence, read N- to C-terminus: DNA ligase (674 aa).

Residues 42 to 46, 91 to 92, and glutamate 121 contribute to the NAD(+) site; these read DNVYD and SM. The active-site N6-AMP-lysine intermediate is lysine 123. Arginine 144, glutamate 178, lysine 294, and lysine 318 together coordinate NAD(+). The Zn(2+) site is built by cysteine 412, cysteine 415, cysteine 430, and cysteine 435. The BRCT domain maps to 596–674; the sequence is VKDSFVAGKT…ETELLANLKD (79 aa).

It belongs to the NAD-dependent DNA ligase family. LigA subfamily. It depends on Mg(2+) as a cofactor. Mn(2+) is required as a cofactor.

It catalyses the reaction NAD(+) + (deoxyribonucleotide)n-3'-hydroxyl + 5'-phospho-(deoxyribonucleotide)m = (deoxyribonucleotide)n+m + AMP + beta-nicotinamide D-nucleotide.. In terms of biological role, DNA ligase that catalyzes the formation of phosphodiester linkages between 5'-phosphoryl and 3'-hydroxyl groups in double-stranded DNA using NAD as a coenzyme and as the energy source for the reaction. It is essential for DNA replication and repair of damaged DNA. The protein is DNA ligase of Lacticaseibacillus paracasei (strain ATCC 334 / BCRC 17002 / CCUG 31169 / CIP 107868 / KCTC 3260 / NRRL B-441) (Lactobacillus paracasei).